Consider the following 115-residue polypeptide: General stress protein 17M (115 aa).

This Bacillus subtilis (strain 168) protein is General stress protein 17M (yflT).